Reading from the N-terminus, the 277-residue chain is NH(3)-dependent NAD(+) synthetase (277 aa).

An ATP-binding site is contributed by 47-54 (GISGGQDS). Residue Asp53 participates in Mg(2+) binding. Deamido-NAD(+) is bound at residue Arg141. Thr161 is a binding site for ATP. Glu166 contacts Mg(2+). Deamido-NAD(+)-binding residues include Lys174 and Asp181. ATP-binding residues include Lys190 and Thr212. 261–262 (HK) is a deamido-NAD(+) binding site.

This sequence belongs to the NAD synthetase family. In terms of assembly, homodimer.

The catalysed reaction is deamido-NAD(+) + NH4(+) + ATP = AMP + diphosphate + NAD(+) + H(+). It functions in the pathway cofactor biosynthesis; NAD(+) biosynthesis; NAD(+) from deamido-NAD(+) (ammonia route): step 1/1. In terms of biological role, catalyzes the ATP-dependent amidation of deamido-NAD to form NAD. Uses ammonia as a nitrogen source. This Lactobacillus gasseri (strain ATCC 33323 / DSM 20243 / BCRC 14619 / CIP 102991 / JCM 1131 / KCTC 3163 / NCIMB 11718 / NCTC 13722 / AM63) protein is NH(3)-dependent NAD(+) synthetase.